Reading from the N-terminus, the 78-residue chain is Sec-independent protein translocase protein TatA (78 aa).

A helical membrane pass occupies residues 1–21 (MGGISIWQLLIVALIVVLLFG). A disordered region spans residues 40–78 (KSAMSSEEEKKAIEDSASEKTAQTEEKKTESKDKDKEQV). The span at 46–78 (EEEKKAIEDSASEKTAQTEEKKTESKDKDKEQV) shows a compositional bias: basic and acidic residues.

The protein belongs to the TatA/E family. In terms of assembly, the Tat system comprises two distinct complexes: a TatABC complex, containing multiple copies of TatA, TatB and TatC subunits, and a separate TatA complex, containing only TatA subunits. Substrates initially bind to the TatABC complex, which probably triggers association of the separate TatA complex to form the active translocon.

The protein resides in the cell inner membrane. In terms of biological role, part of the twin-arginine translocation (Tat) system that transports large folded proteins containing a characteristic twin-arginine motif in their signal peptide across membranes. TatA could form the protein-conducting channel of the Tat system. In Shewanella sediminis (strain HAW-EB3), this protein is Sec-independent protein translocase protein TatA.